A 720-amino-acid chain; its full sequence is NADH-ubiquinone oxidoreductase 78 kDa subunit, mitochondrial (720 aa).

A mitochondrion-targeting transit peptide spans 1–23 (MNSIKSHILRSSKRYISASSKRL). One can recognise a 2Fe-2S ferredoxin-type domain in the interval 24-102 (AEVEVTVDGR…GMVVHTDSER (79 aa)). Positions 58, 69, 72, and 86 each coordinate [2Fe-2S] cluster. Positions 102-141 (RIKKAREGVTEMLLENHPLDCPVCDQGGECDLQEQSQRYG) constitute a 4Fe-4S His(Cys)3-ligated-type domain. One can recognise a 4Fe-4S Mo/W bis-MGD-type domain in the interval 241 to 297 (LKRTETIDVLDAVGSNIRVDTRGIEVMRVLPRLNDDVNEEWISDKTRFACDGLKTQR).

The protein belongs to the complex I 75 kDa subunit family. As to quaternary structure, core subunit of respiratory chain NADH dehydrogenase (Complex I) which is composed of 45 different subunits. This is the largest subunit of complex I and it is a component of the iron-sulfur (IP) fragment of the enzyme. [2Fe-2S] cluster is required as a cofactor. It depends on [4Fe-4S] cluster as a cofactor.

Its subcellular location is the mitochondrion. It carries out the reaction a ubiquinone + NADH + 5 H(+)(in) = a ubiquinol + NAD(+) + 4 H(+)(out). Core subunit of the mitochondrial membrane respiratory chain NADH dehydrogenase (Complex I) which catalyzes electron transfer from NADH through the respiratory chain, using ubiquinone as an electron acceptor. Essential for catalysing the entry and efficient transfer of electrons within complex I. Plays a key role in the assembly and stability of complex I and participates in the association of complex I with ubiquinol-cytochrome reductase complex (Complex III) to form supercomplexes. Plays a role in cell wall integrity and is involved in osmotic and oxidative resistance, yeast to hypha transition, and the ability to damage and invade oral epithelial cells. The sequence is that of NADH-ubiquinone oxidoreductase 78 kDa subunit, mitochondrial from Candida albicans (strain SC5314 / ATCC MYA-2876) (Yeast).